The sequence spans 63 residues: Conotoxin Gm5.1 (63 aa).

The signal sequence occupies residues 1-21; it reads MRYLPVFVILLLLIASIPSDT. The propeptide occupies 22-50; that stretch reads VQLKTKDDMPLASFHGNGRRILRMLSNKR.

Belongs to the conotoxin T superfamily. Contains 2 disulfide bonds that can be either 'C1-C3, C2-C4' or 'C1-C4, C2-C3', since these disulfide connectivities have been observed for conotoxins with cysteine framework V (for examples, see AC P0DQQ7 and AC P81755). Expressed by the venom duct.

It localises to the secreted. The polypeptide is Conotoxin Gm5.1 (Conus gloriamaris (Glory-of-the-Sea cone)).